A 205-amino-acid polypeptide reads, in one-letter code: Probable NAD(P)H dehydrogenase (quinone) FQR1-like 1 (205 aa).

A Flavodoxin-like domain is found at 5-192 (VYIVYYSMYG…GQAFHQGKYI (188 aa)). FMN-binding positions include 11 to 15 (SMYGH), 112 to 165 (IFYS…SPYG), and histidine 136. Tyrosine 13 contacts NAD(+).

Belongs to the WrbA family. FMN serves as cofactor.

It is found in the cell membrane. It catalyses the reaction a quinone + NADH + H(+) = a quinol + NAD(+). It carries out the reaction a quinone + NADPH + H(+) = a quinol + NADP(+). Catalyzes the transfer of electrons from NADH and NADPH to reduce quinone to the hydroquinone state. The polypeptide is Probable NAD(P)H dehydrogenase (quinone) FQR1-like 1 (Arabidopsis thaliana (Mouse-ear cress)).